The following is a 264-amino-acid chain: uncharacterized protein (264 aa).

A signal peptide spans 1-22; sequence MKRKLTICLLIALIFYNGNAKA. A helical transmembrane segment spans residues 227 to 247; the sequence is LLWVIITTGSIIITALTYVGY.

It localises to the membrane. This is an uncharacterized protein from Bacillus subtilis (strain 168).